A 130-amino-acid chain; its full sequence is MNTMENKIIKSKKAQVSLEFSFLFLAILLASIITISHFLSQNFTKDDKVISDVENAAKTAVILANSGYNGINPNVTLIYGGISWSGNKKNIYIYISPKSYITPEIKNFIVSYIYNVTKINQSEYNITVNP.

Positions 1–14 are excised as a propeptide; the sequence is MNTMENKIIKSKKA. Positions 15–23 match the QXSXEXXXL motif; that stretch reads QVSLEFSFL.

In terms of processing, the N-terminus is cleaved by the prepilin peptidase EppA, which recognizes the class III signal sequence.

The protein localises to the secreted. It is found in the cell surface. The protein resides in the fimbrium. This Methanocaldococcus jannaschii (strain ATCC 43067 / DSM 2661 / JAL-1 / JCM 10045 / NBRC 100440) (Methanococcus jannaschii) protein is Probable pilin MJ0835.1.